A 190-amino-acid polypeptide reads, in one-letter code: Imidazole glycerol phosphate synthase subunit HisH (190 aa).

The Glutamine amidotransferase type-1 domain occupies 2–190 (IVGVVDYTVG…IKRFLAVAKR (189 aa)). Cys-73 acts as the Nucleophile in catalysis. Catalysis depends on residues His-169 and Glu-171.

Heterodimer of HisH and HisF.

The protein localises to the cytoplasm. It carries out the reaction 5-[(5-phospho-1-deoxy-D-ribulos-1-ylimino)methylamino]-1-(5-phospho-beta-D-ribosyl)imidazole-4-carboxamide + L-glutamine = D-erythro-1-(imidazol-4-yl)glycerol 3-phosphate + 5-amino-1-(5-phospho-beta-D-ribosyl)imidazole-4-carboxamide + L-glutamate + H(+). The enzyme catalyses L-glutamine + H2O = L-glutamate + NH4(+). It participates in amino-acid biosynthesis; L-histidine biosynthesis; L-histidine from 5-phospho-alpha-D-ribose 1-diphosphate: step 5/9. Functionally, IGPS catalyzes the conversion of PRFAR and glutamine to IGP, AICAR and glutamate. The HisH subunit catalyzes the hydrolysis of glutamine to glutamate and ammonia as part of the synthesis of IGP and AICAR. The resulting ammonia molecule is channeled to the active site of HisF. The chain is Imidazole glycerol phosphate synthase subunit HisH from Pyrobaculum aerophilum (strain ATCC 51768 / DSM 7523 / JCM 9630 / CIP 104966 / NBRC 100827 / IM2).